The following is a 453-amino-acid chain: Odorant receptor 83a (453 aa).

The Cytoplasmic portion of the chain corresponds to 1-28; that stretch reads MKSTFKEERIKDDSKRRDLFVFVRQTMC. The helical transmembrane segment at 29–49 threads the bilayer; it reads IAAMYPFGYYVNGSGVLAVLV. Over 50 to 85 the chain is Extracellular; that stretch reads RFCDLTYELFNYFVSVHIAGLYICTIYINYGQGDLD. Residues 86-106 traverse the membrane as a helical segment; that stretch reads FFVNCLIQTIIYLWTIAMKLY. Residues 107-148 are Cytoplasmic-facing; the sequence is FRRFRPGLLNTILSNINDEYETRSAVGFSFVTMAGSYRMSKL. A helical transmembrane segment spans residues 149-169; it reads WIKTYVYCCYIGTIFWLALPI. Over 170–203 the chain is Extracellular; that stretch reads AYRDRSLPLACWYPFDYTQPGVYEVVFLLQAMGQ. Residues 204-224 traverse the membrane as a helical segment; that stretch reads IQVAASFASSSGLHMVLCVLI. Topologically, residues 225 to 322 are cytoplasmic; that stretch reads SGQYDVLFCS…ALKKIESFYS (98 aa). Residues 323 to 343 traverse the membrane as a helical segment; that stretch reads PIWFVKIGEVTFLMCLVAFVS. Residues 344 to 359 are Extracellular-facing; it reads TKSTAANSFMRMVSLG. Residues 360–380 form a helical membrane-spanning segment; sequence QYLLLVLYELFIICYFADIVF. The Cytoplasmic portion of the chain corresponds to 381 to 408; the sequence is QNSQRCGEALWRSPWQRHLKDVRSDYMF. A helical transmembrane segment spans residues 409 to 429; the sequence is FMLNSRRQFQLTAGKISNLNV. Topologically, residues 430-453 are extracellular; it reads DRFRGTITTAFSFLTLLQKMDARE.

This sequence belongs to the insect chemoreceptor superfamily. Heteromeric odorant receptor channel (TC 1.A.69) family. Or2a subfamily. As to quaternary structure, interacts with Orco. Complexes exist early in the endomembrane system in olfactory sensory neurons (OSNs), coupling these complexes to the conserved ciliary trafficking pathway.

Its subcellular location is the cell membrane. Odorant receptor which mediates acceptance or avoidance behavior, depending on its substrates. The odorant receptor repertoire encodes a large collection of odor stimuli that vary widely in identity, intensity, and duration. May form a complex with Orco to form odorant-sensing units, providing sensitive and prolonged odorant signaling and calcium permeability. Involved in the behavioral responses to pentanol, ethyl acetate, and propyl acetate. The protein is Odorant receptor 83a (Or83a) of Drosophila melanogaster (Fruit fly).